A 619-amino-acid chain; its full sequence is 1-deoxy-D-xylulose-5-phosphate synthase (619 aa).

Thiamine diphosphate contacts are provided by residues H80 and 121–123 (GHS). D152 contributes to the Mg(2+) binding site. Thiamine diphosphate contacts are provided by residues 153–154 (GA), N181, Y288, and E370. N181 is a binding site for Mg(2+).

Belongs to the transketolase family. DXPS subfamily. As to quaternary structure, homodimer. Requires Mg(2+) as cofactor. It depends on thiamine diphosphate as a cofactor.

The catalysed reaction is D-glyceraldehyde 3-phosphate + pyruvate + H(+) = 1-deoxy-D-xylulose 5-phosphate + CO2. It participates in metabolic intermediate biosynthesis; 1-deoxy-D-xylulose 5-phosphate biosynthesis; 1-deoxy-D-xylulose 5-phosphate from D-glyceraldehyde 3-phosphate and pyruvate: step 1/1. In terms of biological role, catalyzes the acyloin condensation reaction between C atoms 2 and 3 of pyruvate and glyceraldehyde 3-phosphate to yield 1-deoxy-D-xylulose-5-phosphate (DXP). The protein is 1-deoxy-D-xylulose-5-phosphate synthase of Yersinia pestis (strain Pestoides F).